The following is a 562-amino-acid chain: Glucocorticoid modulatory element-binding protein 1 (562 aa).

Residue Ala2 is modified to N-acetylalanine. The SAND domain occupies 72–156 (ASSIEANEDM…RKMMDSGQID (85 aa)). Cys103 contributes to the Zn(2+) binding site. DNA is bound by residues Lys129, Lys133, Lys136, and Arg147. 3 residues coordinate Zn(2+): His160, Cys164, and Cys168. Residues 311-357 (LDNRRKQVEHGEEQFLYTLADLERQLEEQKKQAQDPRLKSQTVQNVV) are a coiled coil. A disordered region spans residues 360 to 384 (PVSTPKPPKRPRLQRPASTTVLSPS). Polar residues predominate over residues 375-384 (PASTTVLSPS).

As to quaternary structure, homodimer, and heterodimer of GMEB1 and GMEB2. Interacts with the glucocorticoid receptor (NR3C1) and NCOA2/TIF2. May interact with HSP27 and CREB-binding protein (CBP). Interacts with TRIM63.

The protein localises to the nucleus. It localises to the cytoplasm. Functionally, trans-acting factor that binds to glucocorticoid modulatory elements (GME) present in the TAT (tyrosine aminotransferase) promoter and increases sensitivity to low concentrations of glucocorticoids. Also binds to the transferrin receptor promoter. The polypeptide is Glucocorticoid modulatory element-binding protein 1 (Gmeb1) (Rattus norvegicus (Rat)).